Reading from the N-terminus, the 294-residue chain is Protoheme IX farnesyltransferase (294 aa).

Transmembrane regions (helical) follow at residues 24 to 44 (VVLL…PGWV), 48 to 68 (LIAF…AINH), 96 to 116 (ALWF…LFVN), 118 to 138 (LTAL…TGYL), 145 to 165 (NIVI…TAVT), 172 to 192 (ALLL…ALAI), 211 to 231 (GIQF…VVSL), 241 to 263 (WIYL…KLYF), and 268 to 288 (VVAM…FVFL).

Belongs to the UbiA prenyltransferase family. Protoheme IX farnesyltransferase subfamily.

It localises to the cell inner membrane. The catalysed reaction is heme b + (2E,6E)-farnesyl diphosphate + H2O = Fe(II)-heme o + diphosphate. It functions in the pathway porphyrin-containing compound metabolism; heme O biosynthesis; heme O from protoheme: step 1/1. In terms of biological role, converts heme B (protoheme IX) to heme O by substitution of the vinyl group on carbon 2 of heme B porphyrin ring with a hydroxyethyl farnesyl side group. In Legionella pneumophila (strain Lens), this protein is Protoheme IX farnesyltransferase.